Reading from the N-terminus, the 192-residue chain is Fe/S biogenesis protein NfuA (192 aa).

2 residues coordinate [4Fe-4S] cluster: Cys149 and Cys152.

The protein belongs to the NfuA family. As to quaternary structure, homodimer. [4Fe-4S] cluster serves as cofactor.

Functionally, involved in iron-sulfur cluster biogenesis. Binds a 4Fe-4S cluster, can transfer this cluster to apoproteins, and thereby intervenes in the maturation of Fe/S proteins. Could also act as a scaffold/chaperone for damaged Fe/S proteins. The polypeptide is Fe/S biogenesis protein NfuA (Shewanella loihica (strain ATCC BAA-1088 / PV-4)).